We begin with the raw amino-acid sequence, 170 residues long: Large ribosomal subunit protein bL17 (170 aa).

The span at 124-134 (AAEAPKAAKAA) shows a compositional bias: low complexity. A disordered region spans residues 124-170 (AAEAPKAAKAAPVKEAKPAAEEAPAKPKRTRKPKADEADAEAAKEEN). Composition is skewed to basic and acidic residues over residues 135 to 148 (PVKE…EAPA) and 156 to 170 (PKAD…KEEN).

This sequence belongs to the bacterial ribosomal protein bL17 family. As to quaternary structure, part of the 50S ribosomal subunit. Contacts protein L32.

This is Large ribosomal subunit protein bL17 from Desulfovibrio desulfuricans (strain ATCC 27774 / DSM 6949 / MB).